The primary structure comprises 243 residues: Small ribosomal subunit protein uS3 (243 aa).

A KH type-2 domain is found at isoleucine 39–glutamate 110. Residues lysine 216–serine 243 are disordered. Basic and acidic residues predominate over residues glutamine 233–serine 243.

Belongs to the universal ribosomal protein uS3 family. As to quaternary structure, part of the 30S ribosomal subunit. Forms a tight complex with proteins S10 and S14.

Functionally, binds the lower part of the 30S subunit head. Binds mRNA in the 70S ribosome, positioning it for translation. The polypeptide is Small ribosomal subunit protein uS3 (Prochlorococcus marinus (strain MIT 9312)).